Reading from the N-terminus, the 263-residue chain is Large ribosomal subunit protein uL10m (263 aa).

Residues 1–29 constitute a mitochondrion transit peptide; that stretch reads MPFSVEVEVFFLLVEDKLGWLPTLQPVRH. Residues 241–263 are disordered; that stretch reads QHEGDCATSTEGKPHPPDPAPDS.

It belongs to the universal ribosomal protein uL10 family. In terms of assembly, component of the mitochondrial ribosome large subunit (39S) which comprises a 16S rRNA and about 50 distinct proteins.

It localises to the mitochondrion. The protein is Large ribosomal subunit protein uL10m (Mrpl10) of Rattus norvegicus (Rat).